A 486-amino-acid polypeptide reads, in one-letter code: Carboxypeptidase Y homolog ARB_07161 (486 aa).

Residues 1-17 (MKGLLSLLLVGAANALA) form the signal peptide. Asn111 carries N-linked (GlcNAc...) asparagine glycosylation. Residue Ser241 is part of the active site. 3 cysteine pairs are disulfide-bonded: Cys281/Cys305, Cys288/Cys298, and Cys327/Cys334. Residue Asp403 is part of the active site. Cys406 provides a ligand contact to substrate. Asn430 is a glycosylation site (N-linked (GlcNAc...) asparagine). His462 is an active-site residue.

It belongs to the peptidase S10 family.

It is found in the secreted. It carries out the reaction Release of a C-terminal amino acid with broad specificity.. Its function is as follows. Involved in degradation of small peptides. The protein is Carboxypeptidase Y homolog ARB_07161 of Arthroderma benhamiae (strain ATCC MYA-4681 / CBS 112371) (Trichophyton mentagrophytes).